The primary structure comprises 330 residues: Ubiquinone biosynthesis protein COQ4, mitochondrial (330 aa).

The N-terminal 31 residues, Met1 to Val31, are a transit peptide targeting the mitochondrion. His212, Asp213, His216, and Glu228 together coordinate Zn(2+).

It belongs to the COQ4 family. As to quaternary structure, component of a multi-subunit COQ enzyme complex, composed of at least COQ3, COQ4, COQ5, COQ6, COQ7 and COQ9. The cofactor is Zn(2+).

It localises to the mitochondrion inner membrane. The enzyme catalyses a 4-hydroxy-3-methoxy-5-(all-trans-polyprenyl)benzoate + H(+) = a 2-methoxy-6-(all-trans-polyprenyl)phenol + CO2. It participates in cofactor biosynthesis; ubiquinone biosynthesis. In terms of biological role, lyase that catalyzes the C1-decarboxylation of 4-hydroxy-3-methoxy-5-(all-trans-polyprenyl)benzoic acid into 2-methoxy-6-(all-trans-polyprenyl)phenol during ubiquinone biosynthesis. This chain is Ubiquinone biosynthesis protein COQ4, mitochondrial, found in Candida glabrata (strain ATCC 2001 / BCRC 20586 / JCM 3761 / NBRC 0622 / NRRL Y-65 / CBS 138) (Yeast).